A 61-amino-acid polypeptide reads, in one-letter code: MAKKAMIERWKKPKKYKVREYTRCHICGRPRAVYREFGLCRVCFRKLALEGKLPGVRKASW.

The Zn(2+) site is built by cysteine 24, cysteine 27, cysteine 40, and cysteine 43.

It belongs to the universal ribosomal protein uS14 family. Zinc-binding uS14 subfamily. Part of the 30S ribosomal subunit. Contacts proteins S3 and S10. Zn(2+) is required as a cofactor.

Functionally, binds 16S rRNA, required for the assembly of 30S particles and may also be responsible for determining the conformation of the 16S rRNA at the A site. The polypeptide is Small ribosomal subunit protein uS14 (Thermotoga neapolitana (strain ATCC 49049 / DSM 4359 / NBRC 107923 / NS-E)).